We begin with the raw amino-acid sequence, 621 residues long: MRQPNRKRKLSLESTERMNQDRCTGQTEEEKKPGEVTTPSKRESSVTTAETWSWEQYLREGNAVAAPVELFSKDQSFPEHENGFQVGMRLEGIDARRPSVFCVLSVAEVCGYRLRLHFDGYLSCYDFWTNAGSPDIHPVGWCQKTKHELHIPRDYRKDKFVWMDYLKACRLQNAPKKLFRNRSSNGPVPREFQVGMKLEAVDRRNPCLMCVATIADIVEDRVRVHFDSLDDSFDYWCDVNSPYIQPVGWCQENGRTLVAPQGYPHPDKFSWTDYLRASQSKAVPAKAFGMRTPHGFLPNMKLEAVDKRNPQLIRVATIADVDDYRVKIHFDGWDHKYDYWVDADSQDIHPIGWCDVTGHPLEVPYGSKHVKILPGQPACPTPGCRGIGHIRGPRYAGHHSAFGCPYSDVNLKREAALQDRLREQTQANLELDPSHSKSENPCNLNVNGKCENANSQCRLVQQAKCLKIKGKEDIDLDNLFRVLVFHPRRLEYSAAQVQQMLHQPLSMTSTSAHPFRDIPLSREQHCKLLPGVADIQASQVARWTVDEVAEFVQSLLGCEEHAKCFKKEQIDGKAFLLLTQADIVKVMRIKLGPALKIYNSILMFRNSQDVTEDASSQEDKR.

Residues methionine 1 to threonine 48 form a disordered region. Composition is skewed to basic and acidic residues over residues leucine 10 to glutamine 20 and glutamate 28 to serine 44. MBT repeat units lie at residues tryptophan 52–proline 152, phenylalanine 160–proline 260, and phenylalanine 269–proline 364. The segment at valine 370 to glutamate 414 adopts a CCHHC-type zinc-finger fold. The Zn(2+) site is built by cysteine 379, cysteine 384, histidine 398, and cysteine 404. The 65-residue stretch at tryptophan 543–serine 607 folds into the SAM domain.

It localises to the nucleus. Putative Polycomb group (PcG) protein. PcG proteins maintain the transcriptionally repressive state of genes, probably via a modification of chromatin, rendering it heritably changed in its expressibility. In Mus musculus (Mouse), this protein is Lethal(3)malignant brain tumor-like protein 4 (L3mbtl4).